Here is a 367-residue protein sequence, read N- to C-terminus: S-adenosylmethionine:tRNA ribosyltransferase-isomerase (367 aa).

A disordered region spans residues 150–182 (RHGEEEESSDEAISSQNPEIATESKRTPSNDDK). Positions 171–182 (TESKRTPSNDDK) are enriched in basic and acidic residues.

It belongs to the QueA family. As to quaternary structure, monomer.

It is found in the cytoplasm. The enzyme catalyses 7-aminomethyl-7-carbaguanosine(34) in tRNA + S-adenosyl-L-methionine = epoxyqueuosine(34) in tRNA + adenine + L-methionine + 2 H(+). It participates in tRNA modification; tRNA-queuosine biosynthesis. Functionally, transfers and isomerizes the ribose moiety from AdoMet to the 7-aminomethyl group of 7-deazaguanine (preQ1-tRNA) to give epoxyqueuosine (oQ-tRNA). The sequence is that of S-adenosylmethionine:tRNA ribosyltransferase-isomerase from Rickettsia felis (strain ATCC VR-1525 / URRWXCal2) (Rickettsia azadi).